An 859-amino-acid polypeptide reads, in one-letter code: Leucine--tRNA ligase (859 aa).

The 'HIGH' region signature appears at Pro42–His52. The 'KMSKS' region motif lies at Lys618–Ser622. Position 621 (Lys621) interacts with ATP.

The protein belongs to the class-I aminoacyl-tRNA synthetase family.

The protein resides in the cytoplasm. The catalysed reaction is tRNA(Leu) + L-leucine + ATP = L-leucyl-tRNA(Leu) + AMP + diphosphate. This is Leucine--tRNA ligase from Shewanella sp. (strain MR-4).